Consider the following 1698-residue polypeptide: Cullin-7 (1698 aa).

The segment at 315–357 (QASDRPRSSARSPGSIFQPQLADVSPGLPAAQAQPSFRRSRRF) is disordered. At S339 the chain carries Phosphoserine. One can recognise a CPH domain in the interval 360 to 433 (RSEFASGNTY…HWHMLEILGF (74 aa)). A compositionally biased stretch (basic and acidic residues) spans 601–611 (SEDAAKVEAKE). Residues 601-623 (SEDAAKVEAKEPPSQSPNTPLQR) are disordered. Residues 814 to 993 (PINIPFFDVF…HTRLFYMVRA (180 aa)) form the DOC domain. The disordered stretch occupies residues 1345 to 1370 (GASGKEHKSEKEEEAGAAAVVDVAEG). K1576 is covalently cross-linked (Glycyl lysine isopeptide (Lys-Gly) (interchain with G-Cter in NEDD8)).

It belongs to the cullin family. As to quaternary structure, component of the 3M complex, composed of core components CUL7, CCDC8 and OBSL1. Component of the Cul7-RING(FBXW8) complex consisting of CUL7, RBX1, SKP1 and FBXW8. Within the Cul7-RING(FBXW8) complex interacts with FBXW8 and RBX1, but not with SKP1. Interacts with CUL1 (via the C-terminal domain); the interaction seems to be mediated by FBXW8; it is likely specific to FBXW8, but not other F-box proteins. Interacts (via the CPH domain) with p53/TP53; the interaction preferentially involves tetrameric and dimeric p53/TP53; this interaction recruits p53/TP53 for ubiquitination by neddylated CUL1-RBX1. The CUL7-CUL9 heterodimer seems to interact specifically with p53/TP53. Interacts with FBXW8; interaction is mutually exclusive of binding to CUL9 or p53/TP53. Interacts with CUL9; leading to inhibited CUL9 activity. Interacts with OBSL1. Interacts (as part of the 3M complex) with HDAC4 and HDAC5; it is negatively regulated by ANKRA2. In terms of assembly, (Microbial infection) Interacts with SV40 Large T antigen; this interaction seems to inhibit CUL7. According to a report, may not be neddylated despite the conserved consensus site for neddylation at Lys-1576. Structural study of the Cul7-RING(FBXW8) reveals that both CUL7 and RBX1 are in orientations that are incompatible with neddylation. In terms of tissue distribution, highly expressed in fetal kidney and adult skeletal muscle. Also abundant in fetal brain, as well as in adult pancreas, kidney, placenta and heart. Detected in trophoblasts, lymphoblasts, osteoblasts, chondrocytes and skin fibroblasts.

It localises to the cytoplasm. Its subcellular location is the cytoskeleton. The protein resides in the microtubule organizing center. It is found in the centrosome. The protein localises to the perinuclear region. It localises to the golgi apparatus. Its pathway is protein modification; protein ubiquitination. Core component of the 3M and Cul7-RING(FBXW8) complexes, which mediate the ubiquitination and subsequent proteasomal degradation of target proteins. Core component of the 3M complex, a complex required to regulate microtubule dynamics and genome integrity. It is unclear how the 3M complex regulates microtubules, it could act by controlling the level of a microtubule stabilizer. The Cul7-RING(FBXW8) complex alone lacks ubiquitination activity and does not promote polyubiquitination and proteasomal degradation of p53/TP53. However it mediates recruitment of p53/TP53 for ubiquitination by neddylated CUL1-RBX1. Interaction with CUL9 is required to inhibit CUL9 activity and ubiquitination of BIRC5. The Cul7-RING(FBXW8) complex also mediates ubiquitination and consequent degradation of target proteins such as GORASP1, IRS1 and MAP4K1/HPK1. Ubiquitination of GORASP1 regulates Golgi morphogenesis and dendrite patterning in brain. Mediates ubiquitination and degradation of IRS1 in a mTOR-dependent manner: the Cul7-RING(FBXW8) complex recognizes and binds IRS1 previously phosphorylated by S6 kinase (RPS6KB1 or RPS6KB2). The Cul7-RING(FBXW8) complex also mediates ubiquitination of MAP4K1/HPK1: recognizes and binds autophosphorylated MAP4K1/HPK1, leading to its degradation, thereby affecting cell proliferation and differentiation. Acts as a regulator in trophoblast cell epithelial-mesenchymal transition and placental development. While the Cul7-RING(FBXW8) and the 3M complexes are associated and involved in common processes, CUL7 and the Cul7-RING(FBXW8) complex may have additional functions. Probably plays a role in the degradation of proteins involved in endothelial proliferation and/or differentiation. In Homo sapiens (Human), this protein is Cullin-7 (CUL7).